The sequence spans 227 residues: General transcription factor 3C polypeptide 6 (227 aa).

A disordered region spans residues 157–227 (DEAAGPASDK…DGNVSQNNQS (71 aa)). The segment covering 186-195 (EQEKVEHSEV) has biased composition (basic and acidic residues). Residues 203 to 227 (ETPSEMESSVFMGTQDGNVSQNNQS) are compositionally biased toward polar residues.

The protein belongs to the TFIIIC subunit 6 family. Part of the TFIIIC subcomplex TFIIIC2, consisting of six subunits, GTF3C1, GTF3C2, GTF3C3, GTF3C4, GTF3C5 and GTF3C6. Interacts with GTF3C4 and GTF3C5.

The protein localises to the nucleus. Its function is as follows. Involved in RNA polymerase III-mediated transcription. Integral, tightly associated component of the DNA-binding TFIIIC2 subcomplex that directly binds tRNA and virus-associated RNA promoters. The chain is General transcription factor 3C polypeptide 6 from Mus musculus (Mouse).